A 435-amino-acid chain; its full sequence is Glutamate-1-semialdehyde 2,1-aminomutase (435 aa).

An N6-(pyridoxal phosphate)lysine modification is found at K266.

This sequence belongs to the class-III pyridoxal-phosphate-dependent aminotransferase family. HemL subfamily. In terms of assembly, homodimer. Requires pyridoxal 5'-phosphate as cofactor.

The protein localises to the cytoplasm. It carries out the reaction (S)-4-amino-5-oxopentanoate = 5-aminolevulinate. It participates in porphyrin-containing compound metabolism; protoporphyrin-IX biosynthesis; 5-aminolevulinate from L-glutamyl-tRNA(Glu): step 2/2. In Coxiella burnetii (strain RSA 331 / Henzerling II), this protein is Glutamate-1-semialdehyde 2,1-aminomutase.